A 306-amino-acid polypeptide reads, in one-letter code: Putative NylC-analogous protein (306 aa).

Belongs to the peptidase S58 family.

The sequence is that of Putative NylC-analogous protein from Agromyces sp. (strain KY5R).